We begin with the raw amino-acid sequence, 297 residues long: Mitochondrial substrate carrier family protein P (297 aa).

3 Solcar repeats span residues 12-98 (KPSW…IKNH), 104-189 (SSSF…LKRI), and 201-293 (ISGT…LSNF). The next 6 membrane-spanning stretches (helical) occupy residues 15–35 (WVSF…VAPL), 66–86 (GIKG…PYAA), 107–127 (FQIF…TYPL), 165–185 (IQPT…TFEF), 207–227 (LIAG…FDVV), and 262–282 (ILAL…TASI).

This sequence belongs to the mitochondrial carrier (TC 2.A.29) family.

The protein localises to the mitochondrion inner membrane. Mitochondrial solute carriers shuttle metabolites, nucleotides, and cofactors through the mitochondrial inner membrane. Required for the accumulation of coenzyme A in the mitochondrial matrix. The polypeptide is Mitochondrial substrate carrier family protein P (mcfP) (Dictyostelium discoideum (Social amoeba)).